The chain runs to 426 residues: Enolase (426 aa).

Position 163 (Gln-163) interacts with (2R)-2-phosphoglycerate. Catalysis depends on Glu-205, which acts as the Proton donor. Residues Asp-242, Glu-283, and Asp-310 each coordinate Mg(2+). Residues Lys-335, Arg-364, Ser-365, and Lys-386 each contribute to the (2R)-2-phosphoglycerate site. Lys-335 (proton acceptor) is an active-site residue.

Belongs to the enolase family. Mg(2+) serves as cofactor.

It localises to the cytoplasm. The protein localises to the secreted. It is found in the cell surface. The catalysed reaction is (2R)-2-phosphoglycerate = phosphoenolpyruvate + H2O. It functions in the pathway carbohydrate degradation; glycolysis; pyruvate from D-glyceraldehyde 3-phosphate: step 4/5. Catalyzes the reversible conversion of 2-phosphoglycerate (2-PG) into phosphoenolpyruvate (PEP). It is essential for the degradation of carbohydrates via glycolysis. The sequence is that of Enolase from Pseudarthrobacter chlorophenolicus (strain ATCC 700700 / DSM 12829 / CIP 107037 / JCM 12360 / KCTC 9906 / NCIMB 13794 / A6) (Arthrobacter chlorophenolicus).